We begin with the raw amino-acid sequence, 379 residues long: uncharacterized protein (379 aa).

3 disordered regions span residues methionine 1–threonine 37, valine 130–glutamate 150, and asparagine 332–arginine 379.

Belongs to the chlamydial CPn_0499/CT_392/TC_0671 family.

This is an uncharacterized protein from Chlamydia muridarum (strain MoPn / Nigg).